The sequence spans 180 residues: ATP-dependent protease subunit HslV (180 aa).

The active site involves T2. The Na(+) site is built by G158, C161, and T164.

Belongs to the peptidase T1B family. HslV subfamily. As to quaternary structure, a double ring-shaped homohexamer of HslV is capped on each side by a ring-shaped HslU homohexamer. The assembly of the HslU/HslV complex is dependent on binding of ATP.

The protein resides in the cytoplasm. The enzyme catalyses ATP-dependent cleavage of peptide bonds with broad specificity.. Its activity is regulated as follows. Allosterically activated by HslU binding. Functionally, protease subunit of a proteasome-like degradation complex believed to be a general protein degrading machinery. The polypeptide is ATP-dependent protease subunit HslV (Baumannia cicadellinicola subsp. Homalodisca coagulata).